The following is a 118-amino-acid chain: Hydrogenase maturation factor HypA (118 aa).

H2 is a Ni(2+) binding site. 4 residues coordinate Zn(2+): C73, C76, C90, and C93.

Belongs to the HypA/HybF family.

Functionally, involved in the maturation of [NiFe] hydrogenases. Required for nickel insertion into the metal center of the hydrogenase. This Salmonella typhi protein is Hydrogenase maturation factor HypA.